We begin with the raw amino-acid sequence, 61 residues long: MTRKALMEKAKKEPKYSTRKVNRCKRCGRARGYMRKFDLCRICFRELAHKGEIPGVKKASW.

Cys-24, Cys-27, Cys-40, and Cys-43 together coordinate Zn(2+).

The protein belongs to the universal ribosomal protein uS14 family. Zinc-binding uS14 subfamily. As to quaternary structure, part of the 30S ribosomal subunit. Contacts proteins S3 and S10. It depends on Zn(2+) as a cofactor.

Functionally, binds 16S rRNA, required for the assembly of 30S particles and may also be responsible for determining the conformation of the 16S rRNA at the A site. This is Small ribosomal subunit protein uS14 from Halothermothrix orenii (strain H 168 / OCM 544 / DSM 9562).